The following is a 242-amino-acid chain: Biosynthetic peptidoglycan transglycosylase (242 aa).

A helical transmembrane segment spans residues 18-38 (VIMAVLCIAILYQLWMFSLVV).

The protein belongs to the glycosyltransferase 51 family.

It is found in the cell inner membrane. The catalysed reaction is [GlcNAc-(1-&gt;4)-Mur2Ac(oyl-L-Ala-gamma-D-Glu-L-Lys-D-Ala-D-Ala)](n)-di-trans,octa-cis-undecaprenyl diphosphate + beta-D-GlcNAc-(1-&gt;4)-Mur2Ac(oyl-L-Ala-gamma-D-Glu-L-Lys-D-Ala-D-Ala)-di-trans,octa-cis-undecaprenyl diphosphate = [GlcNAc-(1-&gt;4)-Mur2Ac(oyl-L-Ala-gamma-D-Glu-L-Lys-D-Ala-D-Ala)](n+1)-di-trans,octa-cis-undecaprenyl diphosphate + di-trans,octa-cis-undecaprenyl diphosphate + H(+). It functions in the pathway cell wall biogenesis; peptidoglycan biosynthesis. In terms of biological role, peptidoglycan polymerase that catalyzes glycan chain elongation from lipid-linked precursors. The protein is Biosynthetic peptidoglycan transglycosylase of Bordetella bronchiseptica (strain ATCC BAA-588 / NCTC 13252 / RB50) (Alcaligenes bronchisepticus).